The chain runs to 142 residues: Hemoglobin subunit alpha (142 aa).

The 141-residue stretch at valine 2 to arginine 142 folds into the Globin domain. A Phosphoserine modification is found at serine 4. 2 positions are modified to N6-succinyllysine: lysine 8 and lysine 12. Lysine 17 carries the N6-acetyllysine; alternate modification. Lysine 17 bears the N6-succinyllysine; alternate mark. Tyrosine 25 carries the phosphotyrosine modification. The residue at position 36 (serine 36) is a Phosphoserine. Lysine 41 carries the N6-succinyllysine modification. Serine 50 is modified (phosphoserine). O2 is bound at residue histidine 59. Histidine 88 is a heme b binding site. The residue at position 103 (serine 103) is a Phosphoserine. Phosphothreonine is present on threonine 109. 3 positions are modified to phosphoserine: serine 112, serine 125, and serine 132. A phosphothreonine mark is found at threonine 135 and threonine 138. Position 139 is a phosphoserine (serine 139).

It belongs to the globin family. In terms of assembly, heterotetramer of two alpha chains and two beta chains. As to expression, red blood cells.

Involved in oxygen transport from the lung to the various peripheral tissues. Functionally, hemopressin acts as an antagonist peptide of the cannabinoid receptor CNR1. Hemopressin-binding efficiently blocks cannabinoid receptor CNR1 and subsequent signaling. The sequence is that of Hemoglobin subunit alpha (Hba) from Mus musculus (Mouse).